The sequence spans 71 residues: Small ribosomal subunit protein bS21 (71 aa).

The segment covering 50-59 (AAAVKRHAKK) has biased composition (basic residues). A disordered region spans residues 50 to 71 (AAAVKRHAKKVQREQRRAVRLY). A compositionally biased stretch (basic and acidic residues) spans 60 to 71 (VQREQRRAVRLY).

Belongs to the bacterial ribosomal protein bS21 family.

The chain is Small ribosomal subunit protein bS21 from Pseudomonas fluorescens (strain ATCC BAA-477 / NRRL B-23932 / Pf-5).